We begin with the raw amino-acid sequence, 896 residues long: Translation initiation factor IF-2 (896 aa).

Residues 46-315 are disordered; sequence LAHLNRQHGG…FNKPAQPVER (270 aa). The span at 99–247 shows a compositional bias: basic and acidic residues; the sequence is SASEEQEREE…RKQQEKEDVH (149 aa). Positions 269–278 are enriched in basic residues; the sequence is SRKRGKKRRR. The span at 279–288 shows a compositional bias: basic and acidic residues; that stretch reads KDEESDDTPR. Positions 396–565 constitute a tr-type G domain; the sequence is PRAPVVTVMG…LLQSEVLDLR (170 aa). The tract at residues 405 to 412 is G1; the sequence is GHVDHGKT. GTP is bound at residue 405 to 412; sequence GHVDHGKT. The segment at 430 to 434 is G2; the sequence is GITQH. Residues 451–454 are G3; it reads DTPG. GTP-binding positions include 451–455 and 505–508; these read DTPGH and NKMD. Residues 505–508 are G4; that stretch reads NKMD. The segment at 541–543 is G5; that stretch reads SAH.

Belongs to the TRAFAC class translation factor GTPase superfamily. Classic translation factor GTPase family. IF-2 subfamily.

Its subcellular location is the cytoplasm. Functionally, one of the essential components for the initiation of protein synthesis. Protects formylmethionyl-tRNA from spontaneous hydrolysis and promotes its binding to the 30S ribosomal subunits. Also involved in the hydrolysis of GTP during the formation of the 70S ribosomal complex. The chain is Translation initiation factor IF-2 from Idiomarina loihiensis (strain ATCC BAA-735 / DSM 15497 / L2-TR).